The following is a 500-amino-acid chain: MIDAVKVGFVPFSTAPRGTLVVFCDDALKFGRAASKALGASAGVVKRATTTNQFKGKSAATLDILAPEGLKADRLIVVGAGKASALKGSDFLKYGGVLAGKIRGDNGAVTVIAELPSAAMSPDQSASLASGIRLRAYKFDRYKTRKKDGDDTALHANVTIAVADVAAAKKAFAPDNHVVDGIIIARDLVNEPPNVLYPEEFARRASRLRRVGVGIDILDVKAMTKLGMGALLGVGQGSARPSRTVIMRWNGGKKGEPPVAFVGKGVCFDTGGISIKSAGGMEEMKGDMGGAACVVGLMHALAARKAKVNAVGAIGLVENMPDGNAQRPGDIVTSMSGQTIEIINTDAEGRLVLADVLWYVTRKFKPKVMVDLATLTGAIMVALGTEHAGLFSNNDQLSERLTKVGIETGERVWRMPLAPEYDKLIDSQFADMKNTGGRYGGSITAAQLLQRFVDDTPWAHLDIAGTAMGAPKSDINQSWGSGFGVRLLDRLVAEYYETKR.

Mn(2+) contacts are provided by lysine 264 and aspartate 269. The active site involves lysine 276. Mn(2+) is bound by residues aspartate 287, aspartate 346, and glutamate 348. The active site involves arginine 350.

The protein belongs to the peptidase M17 family. Mn(2+) is required as a cofactor.

It localises to the cytoplasm. The enzyme catalyses Release of an N-terminal amino acid, Xaa-|-Yaa-, in which Xaa is preferably Leu, but may be other amino acids including Pro although not Arg or Lys, and Yaa may be Pro. Amino acid amides and methyl esters are also readily hydrolyzed, but rates on arylamides are exceedingly low.. It catalyses the reaction Release of an N-terminal amino acid, preferentially leucine, but not glutamic or aspartic acids.. In terms of biological role, presumably involved in the processing and regular turnover of intracellular proteins. Catalyzes the removal of unsubstituted N-terminal amino acids from various peptides. The protein is Probable cytosol aminopeptidase of Nitrobacter hamburgensis (strain DSM 10229 / NCIMB 13809 / X14).